The following is a 373-amino-acid chain: Asporin (373 aa).

Positions 1-15 (MKEYVMLLLLAVCSA) are cleaved as a signal peptide. The propeptide occupies 16–32 (KPFFSPSHTALKNMMLK). Serine 48 carries an O-linked (GalNAc...) serine glycan. The LRRNT domain occupies 59–95 (FFPFDLFPTCPFGCQCYSRVVHCSDLGLTSVPNNIPF). Disulfide bonds link cysteine 68–cysteine 74 and cysteine 72–cysteine 81. LRR repeat units follow at residues 96–117 (DTRM…DFKG), 120–141 (SLYA…TFLT), 144–166 (KLRR…PKSL), 167–186 (AELR…TFKG), 189–212 (ALHV…AFEG), 235–255 (TLLE…EDLK), 259–280 (ELQR…TFAN), 283–305 (RVRE…QELK), 306–327 (YLQI…DFCP), 328–349 (TVPK…PMKY), and 350–373 (WEIQ…NVGK). Residues 159–205 (PLNLPKSLAELRIHDNKVKKIQKDTFKGMNALHVLEMSANPLENNGI) form an interaction with TGFB1 region. Asparagine 275 carries N-linked (GlcNAc...) asparagine glycosylation. The cysteines at positions 326 and 359 are disulfide-linked.

This sequence belongs to the small leucine-rich proteoglycan (SLRP) family. SLRP class I subfamily. In terms of assembly, interacts with type I collagen. DCN can inhibit collagen binding. Interacts with TGFB1, TGFB2 and TGFB3. DCN, BGN, and FMOD inhibit binding to TGFB1. Interacts with BMP2. Interacts in vitro with type II collagen. As to expression, higher expression in heart, also detected in kidney, stomach, testes, and skin but only weakly in lung, skeletal muscle, small intestine, and thymus. Expressed specifically and predominantly in the periodontal ligament (PDL). During tooth development, strong expression is seen in the dental follicle, which is the progenitor tissue that forms cementum, alveolar bone, and the PDL. Expressed in the perichondria of the maxilla, mandible, vertebrae, and long bones. Predominantly expressed in the perichondrium/periosteum of long bones (at protein level).

It is found in the secreted. It localises to the extracellular space. The protein resides in the extracellular matrix. Its function is as follows. Binds calcium and plays a role in osteoblast-driven collagen biomineralization activity. Critical regulator of TGF-beta in articular cartilage and plays an essential role in cartilage homeostasis and osteoarthritis (OA) pathogenesis. Negatively regulates chondrogenesis in the articular cartilage by blocking the TGF-beta/receptor interaction on the cell surface and inhibiting the canonical TGF-beta/Smad signal. Negatively regulates periodontal ligament (PDL) differentiation and mineralization to ensure that the PDL is not ossified and to maintain homeostasis of the tooth-supporting system. Inhibits BMP2-induced cytodifferentiation of PDL cells by preventing its binding to BMPR1B/BMP type-1B receptor, resulting in inhibition of BMP-dependent activation of SMAD proteins. Inhibits the interaction between TGFB1 and TGF-beta receptor type II in the presence of heparin/heparan sulfate in vitro. The polypeptide is Asporin (Aspn) (Mus musculus (Mouse)).